The primary structure comprises 158 residues: Ribonuclease H (158 aa).

The RNase H type-1 domain occupies 9 to 155; sequence AFKPVELYTD…CDKLAVAAYQ (147 aa). Mg(2+) contacts are provided by D18, E58, D80, and D147.

Belongs to the RNase H family. Monomer. It depends on Mg(2+) as a cofactor.

Its subcellular location is the cytoplasm. It carries out the reaction Endonucleolytic cleavage to 5'-phosphomonoester.. In terms of biological role, endonuclease that specifically degrades the RNA of RNA-DNA hybrids. The sequence is that of Ribonuclease H from Rhodopirellula baltica (strain DSM 10527 / NCIMB 13988 / SH1).